The following is a 427-amino-acid chain: Adenylosuccinate synthetase (427 aa).

Residues 12-18 (GDEGKGK) and 40-42 (GHT) each bind GTP. Aspartate 13 (proton acceptor) is an active-site residue. Residues aspartate 13 and glycine 40 each contribute to the Mg(2+) site. IMP contacts are provided by residues 13 to 16 (DEGK), 38 to 41 (NAGH), threonine 126, arginine 140, glutamine 221, threonine 236, and arginine 299. The Proton donor role is filled by histidine 41. 295–301 (STTNRPR) provides a ligand contact to substrate. GTP is bound by residues arginine 301, 327–329 (KLD), and 409–411 (SLG).

This sequence belongs to the adenylosuccinate synthetase family. As to quaternary structure, homodimer. Requires Mg(2+) as cofactor.

Its subcellular location is the cytoplasm. The catalysed reaction is IMP + L-aspartate + GTP = N(6)-(1,2-dicarboxyethyl)-AMP + GDP + phosphate + 2 H(+). It participates in purine metabolism; AMP biosynthesis via de novo pathway; AMP from IMP: step 1/2. Its function is as follows. Plays an important role in the de novo pathway of purine nucleotide biosynthesis. Catalyzes the first committed step in the biosynthesis of AMP from IMP. The protein is Adenylosuccinate synthetase of Borrelia turicatae (strain 91E135).